The sequence spans 239 residues: Flagellin B3 (239 aa).

Positions 1–11 are excised as a propeptide; that stretch reads MLKNFMKNKKG. N-linked (GlcNAc...) asparagine glycosylation is found at asparagine 115 and asparagine 128.

Belongs to the archaeal flagellin family. In terms of processing, N-linked glycans consist of the 779 Da trisaccharide beta-ManNAc(Thr)-(1-4)-beta-GlcNAc3NAcA-(1-3)-beta-GlcNAc.

It localises to the archaeal flagellum. In terms of biological role, flagellin is the subunit protein which polymerizes to form the filaments of archaeal flagella. This is Flagellin B3 (flaB3) from Methanococcus voltae.